A 124-amino-acid polypeptide reads, in one-letter code: Ribonuclease pancreatic (124 aa).

A compositionally biased stretch (basic and acidic residues) spans 1–13; that stretch reads KESAAAKFERQHM. The tract at residues 1-24 is disordered; sequence KESAAAKFERQHMDSSTSSASSSN. The substrate site is built by lysine 7 and arginine 10. Histidine 12 serves as the catalytic Proton acceptor. Cystine bridges form between cysteine 26/cysteine 84, cysteine 40/cysteine 95, cysteine 58/cysteine 110, and cysteine 65/cysteine 72. Asparagine 34 is a glycosylation site (N-linked (GlcNAc...) asparagine; partial). Residues 41-45, lysine 66, and arginine 85 each bind substrate; that span reads KPVNT. Residue histidine 119 is the Proton donor of the active site.

It belongs to the pancreatic ribonuclease family. Monomer. Interacts with and forms tight 1:1 complexes with RNH1. Dimerization of two such complexes may occur. Interaction with RNH1 inhibits this protein. Pancreas.

It localises to the secreted. The enzyme catalyses an [RNA] containing cytidine + H2O = an [RNA]-3'-cytidine-3'-phosphate + a 5'-hydroxy-ribonucleotide-3'-[RNA].. The catalysed reaction is an [RNA] containing uridine + H2O = an [RNA]-3'-uridine-3'-phosphate + a 5'-hydroxy-ribonucleotide-3'-[RNA].. Functionally, endonuclease that catalyzes the cleavage of RNA on the 3' side of pyrimidine nucleotides. Acts on single-stranded and double-stranded RNA. This Aepyceros melampus (Impala) protein is Ribonuclease pancreatic (RNASE1).